The primary structure comprises 469 residues: uncharacterized protein (469 aa).

This is an uncharacterized protein from Treponema pallidum (strain Nichols).